The sequence spans 462 residues: Asparagine--tRNA ligase (462 aa).

This sequence belongs to the class-II aminoacyl-tRNA synthetase family. Homodimer.

It is found in the cytoplasm. The catalysed reaction is tRNA(Asn) + L-asparagine + ATP = L-asparaginyl-tRNA(Asn) + AMP + diphosphate + H(+). This chain is Asparagine--tRNA ligase, found in Borreliella burgdorferi (strain ATCC 35210 / DSM 4680 / CIP 102532 / B31) (Borrelia burgdorferi).